The primary structure comprises 356 residues: S-adenosylmethionine:tRNA ribosyltransferase-isomerase (356 aa).

This sequence belongs to the QueA family. In terms of assembly, monomer.

The protein resides in the cytoplasm. The enzyme catalyses 7-aminomethyl-7-carbaguanosine(34) in tRNA + S-adenosyl-L-methionine = epoxyqueuosine(34) in tRNA + adenine + L-methionine + 2 H(+). Its pathway is tRNA modification; tRNA-queuosine biosynthesis. In terms of biological role, transfers and isomerizes the ribose moiety from AdoMet to the 7-aminomethyl group of 7-deazaguanine (preQ1-tRNA) to give epoxyqueuosine (oQ-tRNA). This chain is S-adenosylmethionine:tRNA ribosyltransferase-isomerase, found in Citrobacter koseri (strain ATCC BAA-895 / CDC 4225-83 / SGSC4696).